The chain runs to 125 residues: Protein U2 (125 aa).

The protein belongs to the nanovirus U2 protein family.

In Milk vetch dwarf virus (isolate N) (MDV), this protein is Protein U2 (DNA-U2).